A 623-amino-acid chain; its full sequence is uncharacterized protein (623 aa).

The segment covering 1 to 18 has biased composition (polar residues); the sequence is MSSRSGSADTFTQRSDSN. Disordered stretches follow at residues 1 to 107, 132 to 181, 207 to 231, 298 to 349, 384 to 464, 533 to 553, and 568 to 623; these read MSSR…DPFT, LGSD…EIGA, SWNL…ADTD, REET…ESDQ, RKSV…DRNV, SIND…PPET, and VESR…TKGD. Positions 25–34 are enriched in basic and acidic residues; the sequence is ISLDDVRDNN. Residues 39–49 show a composition bias toward low complexity; sequence SSSGISTTGSS. Residues 132–144 show a composition bias toward polar residues; that stretch reads LGSDTARPTSNGG. A compositionally biased stretch (low complexity) spans 165-177; the sequence is STSTWGPSGPTTP. A compositionally biased stretch (polar residues) spans 328–339; that stretch reads EKSTFSRISEQP. Residues 400-417 are compositionally biased toward low complexity; sequence QTPTISTASSPIQPSSSP. Over residues 533–548 the composition is skewed to polar residues; it reads SINDLQQGTSSSQNQA. A compositionally biased stretch (low complexity) spans 604-614; that stretch reads PSASPSTSRTR.

This is an uncharacterized protein from Emericella nidulans (strain FGSC A4 / ATCC 38163 / CBS 112.46 / NRRL 194 / M139) (Aspergillus nidulans).